We begin with the raw amino-acid sequence, 176 residues long: Small ribosomal subunit protein uS5 (176 aa).

The S5 DRBM domain occupies 11 to 74 (LSEVLVDVNR…QAAKKRMMKV (64 aa)).

The protein belongs to the universal ribosomal protein uS5 family. Part of the 30S ribosomal subunit. Contacts proteins S4 and S8.

Functionally, with S4 and S12 plays an important role in translational accuracy. Its function is as follows. Located at the back of the 30S subunit body where it stabilizes the conformation of the head with respect to the body. This is Small ribosomal subunit protein uS5 from Rickettsia massiliae (strain Mtu5).